The primary structure comprises 442 residues: Protein translocase subunit SecF (442 aa).

The segment at methionine 1–alanine 39 is disordered. The next 6 membrane-spanning stretches (helical) occupy residues tryptophan 67–phenylalanine 87, isoleucine 187–threonine 207, alanine 218–phenylalanine 238, alanine 243–phenylalanine 263, leucine 301–glycine 321, and leucine 331–threonine 351. The segment at valine 366–arginine 442 is disordered. A compositionally biased stretch (low complexity) spans glutamine 402–arginine 432. Basic residues predominate over residues proline 433–arginine 442.

It belongs to the SecD/SecF family. SecF subfamily. Forms a complex with SecD. Part of the essential Sec protein translocation apparatus which comprises SecA, SecYEG and auxiliary proteins SecDF. Other proteins may also be involved.

The protein localises to the cell membrane. Its function is as follows. Part of the Sec protein translocase complex. Interacts with the SecYEG preprotein conducting channel. SecDF uses the proton motive force (PMF) to complete protein translocation after the ATP-dependent function of SecA. This chain is Protein translocase subunit SecF, found in Mycobacterium tuberculosis (strain CDC 1551 / Oshkosh).